We begin with the raw amino-acid sequence, 350 residues long: Protein-glutamate methylesterase/protein-glutamine glutaminase (350 aa).

One can recognise a Response regulatory domain in the interval 5 to 122 (RVLCVDDSAL…REGMLAYSEL (118 aa)). Residue D56 is modified to 4-aspartylphosphate. Positions 153–345 (LLSSEKLIAI…QRMLAQISAG (193 aa)) constitute a CheB-type methylesterase domain. Catalysis depends on residues S165, H191, and D287.

This sequence belongs to the CheB family. In terms of processing, phosphorylated by CheA. Phosphorylation of the N-terminal regulatory domain activates the methylesterase activity.

It localises to the cytoplasm. It carries out the reaction [protein]-L-glutamate 5-O-methyl ester + H2O = L-glutamyl-[protein] + methanol + H(+). It catalyses the reaction L-glutaminyl-[protein] + H2O = L-glutamyl-[protein] + NH4(+). Involved in chemotaxis. Part of a chemotaxis signal transduction system that modulates chemotaxis in response to various stimuli. Catalyzes the demethylation of specific methylglutamate residues introduced into the chemoreceptors (methyl-accepting chemotaxis proteins or MCP) by CheR. Also mediates the irreversible deamidation of specific glutamine residues to glutamic acid. Does not interact with the C-terminal pentapeptide of the chemoreceptors. This is Protein-glutamate methylesterase/protein-glutamine glutaminase from Pectobacterium atrosepticum (strain SCRI 1043 / ATCC BAA-672) (Erwinia carotovora subsp. atroseptica).